The chain runs to 892 residues: Integrator complex subunit 6 (892 aa).

Residues 3–227 (ILLFLIDTSA…QCLESLVQKV (225 aa)) form the VWFA domain. Residues 630–637 (MMIDEADE) carry the Inhibitory loop motif. Disordered stretches follow at residues 665–692 (MSPL…GTQG), 711–754 (VGGT…AAPD), and 771–793 (PDHT…EVNE).

It belongs to the Integrator subunit 6 family. As to quaternary structure, component of the Integrator complex, composed of core subunits INTS1, INTS2, INTS3, INTS4, INTS5, INTS6, INTS7, INTS8, INTS9/RC74, INTS10, INTS11/CPSF3L, INTS12, INTS13, INTS14 and INTS15. The core complex associates with protein phosphatase 2A subunits PPP2CA and PPP2R1A, to form the Integrator-PP2A (INTAC) complex.

It is found in the nucleus. It localises to the chromosome. Its function is as follows. Component of the integrator complex, a multiprotein complex that terminates RNA polymerase II (Pol II) transcription in the promoter-proximal region of genes. The integrator complex provides a quality checkpoint during transcription elongation by driving premature transcription termination of transcripts that are unfavorably configured for transcriptional elongation: the complex terminates transcription by (1) catalyzing dephosphorylation of the C-terminal domain (CTD) of Pol II subunit POLR2A/RPB1 and SUPT5H/SPT5, (2) degrading the exiting nascent RNA transcript via endonuclease activity and (3) promoting the release of Pol II from bound DNA. The integrator complex is also involved in terminating the synthesis of non-coding Pol II transcripts, such as enhancer RNAs (eRNAs), small nuclear RNAs (snRNAs), telomerase RNAs and long non-coding RNAs (lncRNAs). Within the integrator complex, INTS6 acts as a molecular adapter that promotes assembly of protein phosphatase 2A (PP2A) subunits to the integrator core complex, promoting recruitment of PP2A to transcription pause-release checkpoint. This is Integrator complex subunit 6 (ints6l) from Danio rerio (Zebrafish).